The primary structure comprises 413 residues: Chloramphenicol efflux pump MT0201 (413 aa).

12 helical membrane-spanning segments follow: residues 23–43 (LSVL…PVGA), 55–75 (VVLV…TTVP), 89–109 (LVVS…APNF), 110–130 (AVLA…WAVI), 150–170 (IYIG…AMSL), 176–196 (LAAV…RLAL), 226–246 (VLTM…VVII), 256–276 (NLAW…PLVA), 286–306 (AVIV…ALAF), 312–332 (AATA…ATAV), 353–373 (GLYV…GGLL), and 378–398 (LAMM…GMTV).

It belongs to the major facilitator superfamily.

The protein resides in the cell membrane. In terms of biological role, active efflux pump that plays an important role in chloramphenicol resistance. This chain is Chloramphenicol efflux pump MT0201, found in Mycobacterium tuberculosis (strain CDC 1551 / Oshkosh).